A 121-amino-acid polypeptide reads, in one-letter code: UPF0344 protein BT9727_1053 (121 aa).

A run of 4 helical transmembrane segments spans residues 6–26, 38–58, 65–85, and 92–112; these read ITAW…YSAG, LMYI…MKTA, WYGL…MVLV, and ATGA…YLGL.

The protein belongs to the UPF0344 family.

Its subcellular location is the cell membrane. The polypeptide is UPF0344 protein BT9727_1053 (Bacillus thuringiensis subsp. konkukian (strain 97-27)).